The following is a 407-amino-acid chain: POC1 centriolar protein homolog A (407 aa).

7 WD repeats span residues 17 to 56 (GHRD…RAYR), 59 to 98 (GHKD…ESTV), 101 to 140 (AHTA…FLFS), 143 to 182 (QHIN…CVHS), 185 to 224 (EHGG…LLQH), 227 to 266 (LHSA…LLYT), and 269 to 308 (GHQG…VDYG). Residues 317–357 (PATRASSSGTLPEVDPLVPPGRGRSQESMQSHSQEPVSVPQ) are disordered. The segment covering 342–357 (QESMQSHSQEPVSVPQ) has biased composition (polar residues). Residues 369–397 (QLDVLTQTVSILEQRLTLTEDKLKQCLEN) adopt a coiled-coil conformation.

This sequence belongs to the WD repeat POC1 family. In terms of assembly, interacts with POC1B.

The protein localises to the cytoplasm. The protein resides in the cytoskeleton. Its subcellular location is the microtubule organizing center. It is found in the centrosome. It localises to the centriole. The protein localises to the cilium basal body. The protein resides in the spindle pole. In terms of biological role, plays an important role in centriole assembly and/or stability and ciliogenesis. Involved in early steps of centriole duplication, as well as in the later steps of centriole length control. Acts in concert with POC1B to ensure centriole integrity and proper mitotic spindle formation. The protein is POC1 centriolar protein homolog A (POC1A) of Bos taurus (Bovine).